The following is a 563-amino-acid chain: Protein NOXP20 (563 aa).

The disordered stretch occupies residues 1-84; sequence MSDDAGDTLA…ANALEPPLNG (84 aa). Residues 56 to 68 show a composition bias toward low complexity; the sequence is AAVQGAGAAAIGP. Residue serine 120 is modified to Phosphoserine. A disordered region spans residues 165–206; sequence VNSGSSEGAQPNTENGVPEITDAATDQGPAESPPTSPSSASR. Over residues 166–179 the composition is skewed to polar residues; sequence NSGSSEGAQPNTEN. Threonine 185 and threonine 189 each carry phosphothreonine. Phosphoserine is present on serine 196. Threonine 199 bears the Phosphothreonine mark. Serine 202 and serine 261 each carry phosphoserine. The stretch at 343–367 forms a coiled coil; sequence AAKELENEENQEEQGLEEKGEEFAR. Residues 411-436 form a disordered region; sequence SEEETKKEEKEEKSQDPQEDKKEEKK.

This sequence belongs to the FAM114 family.

The protein resides in the cytoplasm. May play a role in neuronal cell development. This is Protein NOXP20 (FAM114A1) from Homo sapiens (Human).